A 147-amino-acid chain; its full sequence is UPF0306 protein YE0465 (147 aa).

This sequence belongs to the UPF0306 family.

This chain is UPF0306 protein YE0465, found in Yersinia enterocolitica serotype O:8 / biotype 1B (strain NCTC 13174 / 8081).